We begin with the raw amino-acid sequence, 576 residues long: Urease subunit alpha (576 aa).

The Urease domain occupies 132 to 576 (GGVDTHIHFI…LPMAQRYFLF (445 aa)). The Ni(2+) site is built by His137, His139, and Lys220. The residue at position 220 (Lys220) is an N6-carboxylysine. His222 serves as a coordination point for substrate. Ni(2+) contacts are provided by His249 and His275. Catalysis depends on His323, which acts as the Proton donor. Position 363 (Asp363) interacts with Ni(2+).

This sequence belongs to the metallo-dependent hydrolases superfamily. Urease alpha subunit family. Heterotrimer of UreA (gamma), UreB (beta) and UreC (alpha) subunits. Three heterotrimers associate to form the active enzyme. Ni cation serves as cofactor. Carboxylation allows a single lysine to coordinate two nickel ions.

It localises to the cytoplasm. It catalyses the reaction urea + 2 H2O + H(+) = hydrogencarbonate + 2 NH4(+). The protein operates within nitrogen metabolism; urea degradation; CO(2) and NH(3) from urea (urease route): step 1/1. The sequence is that of Urease subunit alpha from Arthrobacter sp. (strain FB24).